A 556-amino-acid polypeptide reads, in one-letter code: HIRA-interacting protein 3 (556 aa).

At S27 the chain carries Phosphoserine. The segment covering 64–77 has biased composition (basic and acidic residues); it reads DEAASREDKLDLTK. Positions 64-426 are disordered; that stretch reads DEAASREDKL…GRRGEDHPAV (363 aa). The residue at position 84 (T84) is a Phosphothreonine. Phosphoserine is present on residues S87, S98, S100, S125, S142, S143, S159, and S160. The segment covering 99 to 108 has biased composition (low complexity); the sequence is ESESGSEASS. Over residues 126 to 158 the composition is skewed to basic and acidic residues; it reads PAKEENPRRASKAVEESSDEERQRDLPAQRGEE. Positions 168-177 are enriched in basic residues; it reads KGKTRKKPVV. Phosphoserine is present on residues S196, S199, S223, and S227. Residues 209-224 show a composition bias toward basic and acidic residues; it reads KKVEGNKGTKSLKESE. Positions 240-254 are enriched in acidic residues; that stretch reads EEEVEEEEKEEDEEK. Over residues 260–269 the composition is skewed to basic residues; sequence RTRSNGRRKS. Residues S289 and S291 each carry the phosphoserine modification. Positions 304–322 are enriched in basic and acidic residues; it reads DSGRDREPPVQRKSEDRTQ. S330, S332, S333, and S357 each carry phosphoserine. T358 bears the Phosphothreonine mark. Phosphoserine occurs at positions 359, 363, 370, and 372. Positions 385 to 396 are enriched in basic residues; that stretch reads RSSKKSSRKGRT. Residues 403 to 527 are interaction with the histone H2A-H2B complex; sequence SDGSPEAKGG…APPGELYRRT (125 aa). T471 is subject to Phosphothreonine. The interval 502–556 is disordered; sequence SGRPRRRTAWNPLGEAAPPGELYRRTLDSDEERPRPAPPDWSHMRGIISSDGESN. Over residues 523 to 536 the composition is skewed to basic and acidic residues; it reads LYRRTLDSDEERPR. A phosphoserine mark is found at S530, S550, S551, and S555.

Interacts (via C-terminus) with histone H2A-H2B dimers; the interaction is direct. Interacts with HIRA. Interacts with CK2. Phosphorylated by CK2. As to expression, widely expressed. Isoform 1 is predominant in skeletal muscle. Isoform 2 is predominant in liver and heart.

It is found in the nucleus. In terms of biological role, histone chaperone that carries a H2A-H2B histone complex and facilitates its deposition onto chromatin. This is HIRA-interacting protein 3 (HIRIP3) from Homo sapiens (Human).